The primary structure comprises 252 residues: Imidazole glycerol phosphate synthase subunit HisF (252 aa).

Catalysis depends on residues aspartate 11 and aspartate 130.

The protein belongs to the HisA/HisF family. Heterodimer of HisH and HisF.

It is found in the cytoplasm. The enzyme catalyses 5-[(5-phospho-1-deoxy-D-ribulos-1-ylimino)methylamino]-1-(5-phospho-beta-D-ribosyl)imidazole-4-carboxamide + L-glutamine = D-erythro-1-(imidazol-4-yl)glycerol 3-phosphate + 5-amino-1-(5-phospho-beta-D-ribosyl)imidazole-4-carboxamide + L-glutamate + H(+). It functions in the pathway amino-acid biosynthesis; L-histidine biosynthesis; L-histidine from 5-phospho-alpha-D-ribose 1-diphosphate: step 5/9. Functionally, IGPS catalyzes the conversion of PRFAR and glutamine to IGP, AICAR and glutamate. The HisF subunit catalyzes the cyclization activity that produces IGP and AICAR from PRFAR using the ammonia provided by the HisH subunit. The sequence is that of Imidazole glycerol phosphate synthase subunit HisF from Thermococcus onnurineus (strain NA1).